Here is a 159-residue protein sequence, read N- to C-terminus: Ribosomal RNA large subunit methyltransferase H (159 aa).

S-adenosyl-L-methionine contacts are provided by residues leucine 76, glycine 107, and 126 to 131 (ISSLTL).

It belongs to the RNA methyltransferase RlmH family. Homodimer.

It is found in the cytoplasm. It carries out the reaction pseudouridine(1915) in 23S rRNA + S-adenosyl-L-methionine = N(3)-methylpseudouridine(1915) in 23S rRNA + S-adenosyl-L-homocysteine + H(+). Specifically methylates the pseudouridine at position 1915 (m3Psi1915) in 23S rRNA. The chain is Ribosomal RNA large subunit methyltransferase H from Cupriavidus metallidurans (strain ATCC 43123 / DSM 2839 / NBRC 102507 / CH34) (Ralstonia metallidurans).